The sequence spans 549 residues: Probable protein kinase UbiB (549 aa).

The Protein kinase domain maps to aspartate 123–methionine 501. Residues leucine 129–valine 137 and lysine 152 contribute to the ATP site. The active-site Proton acceptor is aspartate 287. A run of 2 helical transmembrane segments spans residues asparagine 499–phenylalanine 516 and threonine 521–tryptophan 540.

Belongs to the ABC1 family. UbiB subfamily.

It localises to the cell inner membrane. The protein operates within cofactor biosynthesis; ubiquinone biosynthesis [regulation]. In terms of biological role, is probably a protein kinase regulator of UbiI activity which is involved in aerobic coenzyme Q (ubiquinone) biosynthesis. The polypeptide is Probable protein kinase UbiB (Shewanella sp. (strain W3-18-1)).